A 1011-amino-acid chain; its full sequence is Liprin-beta-1 (1011 aa).

At serine 37 the chain carries Phosphoserine. Phosphothreonine is present on threonine 39. Position 40 is a phosphoserine (serine 40). A coiled-coil region spans residues 156–405; sequence QQELLSRTSL…VPEEFHTTIL (250 aa). Lysine 322 is modified (N6-acetyllysine). Disordered regions lie at residues 420-439 and 463-634; these read ETSE…EEND and KSSS…RDLG. A phosphoserine mark is found at serine 434 and serine 466. Positions 470-492 are enriched in basic and acidic residues; that stretch reads LKKETSDGEKETIQKTSEDRAPA. Lysine 471 is covalently cross-linked (Glycyl lysine isopeptide (Lys-Gly) (interchain with G-Cter in SUMO2)). Residues serine 523 and serine 540 each carry the phosphoserine modification. The segment covering 546–556 has biased composition (basic and acidic residues); that stretch reads ETEKETAEHLD. Position 579 is a phosphoserine (serine 579). The segment covering 584-598 has biased composition (basic residues); it reads KKSRGIMKLFGKLRR. 2 positions are modified to phosphoserine: serine 601 and serine 636. SAM domains are found at residues 647-711 and 719-782; these read WTKE…LGSE and LDFN…LRIN. Serine 794 carries the post-translational modification Phosphoserine. In terms of domain architecture, SAM 3 spans 804 to 876; that stretch reads VQKWTNHRVM…ATHFNLLIGA (73 aa). Serine 999, serine 1001, and serine 1003 each carry phosphoserine. The residue at position 1005 (threonine 1005) is a Phosphothreonine.

Belongs to the liprin family. Liprin-beta subfamily. Forms homodimers and heterodimers. Interacts with S100A4 in a Ca(2+)-dependent mode. Part of a cortical microtubule stabilization complex (CMSC) composed of KANK1, PPFIA1, PPFIBP1, ERC1/ELKS, PHLDB2/LL5beta, CLASPs, KIF21A and possibly additional interactors; within CMSCs KANK1 and PHLDB2/LL5beta seem to be the core components for recruiting microtubule-binding proteins KIF21A and CLASPs, whereas PPFIA1, PPFIBP1 and ERC1/ELKS serve as scaffolds for protein clustering. Interacts with KANK1 (via CC1 domain, residues 244-339). As to expression, widely expressed. Absent in liver.

It is found in the cytoplasm. The protein resides in the cell cortex. Its function is as follows. May regulate the disassembly of focal adhesions. Did not bind receptor-like tyrosine phosphatases type 2A. This chain is Liprin-beta-1 (PPFIBP1), found in Homo sapiens (Human).